A 729-amino-acid chain; its full sequence is Probable pre-mRNA-splicing factor ATP-dependent RNA helicase DEAH3 (729 aa).

Residues Leu-75 to Pro-244 form the Helicase ATP-binding domain. Gly-88 to Thr-95 provides a ligand contact to ATP. Positions Asp-191–His-194 match the DEAH box motif. Positions Thr-269 to Gly-449 constitute a Helicase C-terminal domain.

It belongs to the DEAD box helicase family. DEAH subfamily. PRP43 sub-subfamily.

It catalyses the reaction ATP + H2O = ADP + phosphate + H(+). In terms of biological role, may be involved in pre-mRNA splicing. The chain is Probable pre-mRNA-splicing factor ATP-dependent RNA helicase DEAH3 from Arabidopsis thaliana (Mouse-ear cress).